Here is a 610-residue protein sequence, read N- to C-terminus: Elongation factor 4 (610 aa).

The tr-type G domain maps to 13–195 (SHIRNFSIVA…AIVRKLPAPK (183 aa)). Residues 25–30 (DHGKST) and 142–145 (NKID) each bind GTP.

It belongs to the TRAFAC class translation factor GTPase superfamily. Classic translation factor GTPase family. LepA subfamily.

Its subcellular location is the cell inner membrane. The enzyme catalyses GTP + H2O = GDP + phosphate + H(+). In terms of biological role, required for accurate and efficient protein synthesis under certain stress conditions. May act as a fidelity factor of the translation reaction, by catalyzing a one-codon backward translocation of tRNAs on improperly translocated ribosomes. Back-translocation proceeds from a post-translocation (POST) complex to a pre-translocation (PRE) complex, thus giving elongation factor G a second chance to translocate the tRNAs correctly. Binds to ribosomes in a GTP-dependent manner. The chain is Elongation factor 4 from Rhizobium etli (strain CIAT 652).